We begin with the raw amino-acid sequence, 376 residues long: Chaperone protein DnaJ (376 aa).

The J domain maps to 5-70 (DFYEVLGVER…SKRAAYDQYG (66 aa)). The CR-type zinc-finger motif lies at 135–213 (GTTVTIRVPT…CHGQGRVEEQ (79 aa)). Residues Cys-148, Cys-151, Cys-165, Cys-168, Cys-187, Cys-190, Cys-201, and Cys-204 each coordinate Zn(2+). CXXCXGXG motif repeat units follow at residues 148–155 (CKTCDGSG), 165–172 (CTTCGGIG), 187–194 (CPRCHGSG), and 201–208 (CGSCHGQG).

It belongs to the DnaJ family. In terms of assembly, homodimer. It depends on Zn(2+) as a cofactor.

Its subcellular location is the cytoplasm. Functionally, participates actively in the response to hyperosmotic and heat shock by preventing the aggregation of stress-denatured proteins and by disaggregating proteins, also in an autonomous, DnaK-independent fashion. Unfolded proteins bind initially to DnaJ; upon interaction with the DnaJ-bound protein, DnaK hydrolyzes its bound ATP, resulting in the formation of a stable complex. GrpE releases ADP from DnaK; ATP binding to DnaK triggers the release of the substrate protein, thus completing the reaction cycle. Several rounds of ATP-dependent interactions between DnaJ, DnaK and GrpE are required for fully efficient folding. Also involved, together with DnaK and GrpE, in the DNA replication of plasmids through activation of initiation proteins. This chain is Chaperone protein DnaJ, found in Stutzerimonas stutzeri (Pseudomonas stutzeri).